The sequence spans 147 residues: Male-specific protein scotti (147 aa).

A disordered region spans residues E57–R76. N128 is a glycosylation site (N-linked (GlcNAc...) asparagine).

This sequence belongs to the male-specific scotti family.

Functionally, post-meiotically transcribed gene that has a role in late spermiogenesis; required for actin cone progression during spermatid individualization. This chain is Male-specific protein scotti, found in Drosophila simulans (Fruit fly).